A 435-amino-acid polypeptide reads, in one-letter code: Envelope glycoprotein M (435 aa).

Residues 1-36 (MGTQKKGPRSEKVSPYDTTTPEVEALDHQMDTLNWR) are Intravirion-facing. Residues 37–57 (IWIIQVMMFTLGAVMLLATLI) traverse the membrane as a helical segment. The Virion surface portion of the chain corresponds to 58–111 (AASSEYTGIPCFYAAVVDYELFNATLDGGVWSGNRGGYSAPVLFLEPHSVVAFT). Residues 112–132 (YYTALTAMAMAVYTLITAAII) form a helical membrane-spanning segment. Topologically, residues 133 to 155 (HRETKNQRVRQSSGVAWLVVDPT) are intravirion. A helical transmembrane segment spans residues 156-176 (TLFWGLLSLWLLNAVVLLLAY). Over 177–178 (KQ) the chain is Virion surface. Residues 179 to 199 (IGVAATLYLGHFATSVIFTTY) traverse the membrane as a helical segment. Topologically, residues 200–233 (FCGRGKLDETNIKAVANLRQQSVFLYRLAGPTRA) are intravirion. A helical membrane pass occupies residues 234–254 (VFVNLMAALMAICILFVSLML). Over 255–265 (ELVVANHLHTG) the chain is Virion surface. A helical membrane pass occupies residues 266 to 288 (LWSSVSVAMSTFSTLSVVYLIVS). At 289 to 294 (ELILAH) the chain is on the intravirion side. Residues 295–317 (YIHVLIGPSLGTLVACATLGTAA) form a helical membrane-spanning segment. The Virion surface segment spans residues 318-334 (HSYMDRLYDPISVQSPR). A helical membrane pass occupies residues 335-355 (LIPTTRGTLACLAVFSVVMLL). The Intravirion segment spans residues 356–435 (LRLMRAYVYH…LYERSNSGWE (80 aa)).

This sequence belongs to the herpesviridae glycoprotein M family. As to quaternary structure, interacts (via N-terminus) with gN (via N-terminus). The gM-gN heterodimer forms the gCII complex.

It localises to the virion membrane. The protein localises to the host Golgi apparatus. Its subcellular location is the host trans-Golgi network. The protein resides in the host endosome membrane. It is found in the host nucleus inner membrane. Functionally, envelope glycoprotein important for virion assembly and egress. Plays a role in the correct incorporation of gH-gL into virion membrane. Directs the glycoprotein N (gN) to the host trans-Golgi network. This chain is Envelope glycoprotein M, found in Homo sapiens (Human).